An 89-amino-acid chain; its full sequence is Small ribosomal subunit protein uS14 (89 aa).

The protein belongs to the universal ribosomal protein uS14 family. As to quaternary structure, part of the 30S ribosomal subunit. Contacts proteins S3 and S10.

Binds 16S rRNA, required for the assembly of 30S particles and may also be responsible for determining the conformation of the 16S rRNA at the A site. The chain is Small ribosomal subunit protein uS14 from Azobacteroides pseudotrichonymphae genomovar. CFP2.